Consider the following 216-residue polypeptide: Kynurenine formamidase (216 aa).

Trp25 is a substrate binding site. His55, His59, and Asp61 together coordinate Zn(2+). His65 acts as the Proton donor/acceptor in catalysis. Residues His167 and Glu179 each contribute to the Zn(2+) site.

This sequence belongs to the Cyclase 1 superfamily. KynB family. Homodimer. It depends on Zn(2+) as a cofactor.

It carries out the reaction N-formyl-L-kynurenine + H2O = L-kynurenine + formate + H(+). It functions in the pathway amino-acid degradation; L-tryptophan degradation via kynurenine pathway; L-kynurenine from L-tryptophan: step 2/2. Functionally, catalyzes the hydrolysis of N-formyl-L-kynurenine to L-kynurenine, the second step in the kynurenine pathway of tryptophan degradation. The polypeptide is Kynurenine formamidase (Cupriavidus necator (strain ATCC 17699 / DSM 428 / KCTC 22496 / NCIMB 10442 / H16 / Stanier 337) (Ralstonia eutropha)).